The following is a 346-amino-acid chain: Bifunctional phosphatase IMPL2, chloroplastic (346 aa).

The transit peptide at 1-61 (MLAQSHFFSK…VSRRRFCLTM (61 aa)) directs the protein to the chloroplast. Residues Glu-147, Asp-165, and Asp-168 each coordinate Mg(2+). Glu-147 is a substrate binding site. Substrate contacts are provided by residues 167–170 (IDGT), 263–265 (GCD), Glu-282, and Asp-289. A Mg(2+)-binding site is contributed by Asp-289.

Belongs to the inositol monophosphatase superfamily. It depends on Mg(2+) as a cofactor. In terms of tissue distribution, ubiquitous. High expression in roots. Expressed in pistil and seed endosperm.

It is found in the plastid. The protein resides in the chloroplast. The enzyme catalyses a myo-inositol phosphate + H2O = myo-inositol + phosphate. The catalysed reaction is L-histidinol phosphate + H2O = L-histidinol + phosphate. It catalyses the reaction beta-L-galactose 1-phosphate + H2O = L-galactose + phosphate. The protein operates within amino-acid biosynthesis; L-histidine biosynthesis; L-histidine from 5-phospho-alpha-D-ribose 1-diphosphate: step 8/9. It participates in polyol metabolism; myo-inositol biosynthesis; myo-inositol from D-glucose 6-phosphate: step 2/2. Functionally, phosphatase required for histidine production. Also acts on L-galactose 1-phosphate (L-Gal 1-P), D-myoinositol 3-phosphate (D-Ins 3-P) and D-myoinositol 1-phosphate (D-Ins 1-P). The sequence is that of Bifunctional phosphatase IMPL2, chloroplastic (HISN7) from Arabidopsis thaliana (Mouse-ear cress).